A 315-amino-acid polypeptide reads, in one-letter code: Aspartate carbamoyltransferase catalytic subunit (315 aa).

Arg54 and Thr55 together coordinate carbamoyl phosphate. Lys82 is an L-aspartate binding site. 3 residues coordinate carbamoyl phosphate: Arg104, His134, and Gln137. Arg174 and Arg229 together coordinate L-aspartate. Residues Gly270 and Pro271 each contribute to the carbamoyl phosphate site.

Belongs to the aspartate/ornithine carbamoyltransferase superfamily. ATCase family. Heterododecamer (2C3:3R2) of six catalytic PyrB chains organized as two trimers (C3), and six regulatory PyrI chains organized as three dimers (R2).

It catalyses the reaction carbamoyl phosphate + L-aspartate = N-carbamoyl-L-aspartate + phosphate + H(+). Its pathway is pyrimidine metabolism; UMP biosynthesis via de novo pathway; (S)-dihydroorotate from bicarbonate: step 2/3. Catalyzes the condensation of carbamoyl phosphate and aspartate to form carbamoyl aspartate and inorganic phosphate, the committed step in the de novo pyrimidine nucleotide biosynthesis pathway. In Leifsonia xyli subsp. xyli (strain CTCB07), this protein is Aspartate carbamoyltransferase catalytic subunit.